The sequence spans 507 residues: ATP synthase subunit alpha, chloroplastic (507 aa).

170-177 contacts ATP; the sequence is GDRQTGKT.

The protein belongs to the ATPase alpha/beta chains family. In terms of assembly, F-type ATPases have 2 components, CF(1) - the catalytic core - and CF(0) - the membrane proton channel. CF(1) has five subunits: alpha(3), beta(3), gamma(1), delta(1), epsilon(1). CF(0) has four main subunits: a, b, b' and c.

The protein localises to the plastid. Its subcellular location is the chloroplast thylakoid membrane. It catalyses the reaction ATP + H2O + 4 H(+)(in) = ADP + phosphate + 5 H(+)(out). Its function is as follows. Produces ATP from ADP in the presence of a proton gradient across the membrane. The alpha chain is a regulatory subunit. The polypeptide is ATP synthase subunit alpha, chloroplastic (Drimys granadensis).